The primary structure comprises 71 residues: Sec-independent protein translocase protein TatA (71 aa).

The helical transmembrane segment at 1–21 (MGSFSMWHWLIVLAIVLLLFG) threads the bilayer. Residues 40–71 (KKGMSDDDTAPDGTPKPADQSKTVDHRADDHK) form a disordered region. Residues 61 to 71 (KTVDHRADDHK) are compositionally biased toward basic and acidic residues.

This sequence belongs to the TatA/E family. The Tat system comprises two distinct complexes: a TatABC complex, containing multiple copies of TatA, TatB and TatC subunits, and a separate TatA complex, containing only TatA subunits. Substrates initially bind to the TatABC complex, which probably triggers association of the separate TatA complex to form the active translocon.

Its subcellular location is the cell inner membrane. In terms of biological role, part of the twin-arginine translocation (Tat) system that transports large folded proteins containing a characteristic twin-arginine motif in their signal peptide across membranes. TatA could form the protein-conducting channel of the Tat system. This chain is Sec-independent protein translocase protein TatA, found in Allorhizobium ampelinum (strain ATCC BAA-846 / DSM 112012 / S4) (Agrobacterium vitis (strain S4)).